We begin with the raw amino-acid sequence, 142 residues long: Prefoldin subunit alpha (142 aa).

This sequence belongs to the prefoldin subunit alpha family. As to quaternary structure, heterohexamer of two alpha and four beta subunits.

It is found in the cytoplasm. Its function is as follows. Molecular chaperone capable of stabilizing a range of proteins. Seems to fulfill an ATP-independent, HSP70-like function in archaeal de novo protein folding. This is Prefoldin subunit alpha from Methanosarcina mazei (strain ATCC BAA-159 / DSM 3647 / Goe1 / Go1 / JCM 11833 / OCM 88) (Methanosarcina frisia).